A 199-amino-acid polypeptide reads, in one-letter code: Outer-membrane lipoprotein LolB (199 aa).

The first 28 residues, 1 to 28 (MAAAGSLCQTAWRVRGWLAAGLCALLAG), serve as a signal peptide directing secretion. C29 carries the N-palmitoyl cysteine lipid modification. C29 carries S-diacylglycerol cysteine lipidation.

It belongs to the LolB family. As to quaternary structure, monomer.

Its subcellular location is the cell outer membrane. In terms of biological role, plays a critical role in the incorporation of lipoproteins in the outer membrane after they are released by the LolA protein. This chain is Outer-membrane lipoprotein LolB, found in Bordetella petrii (strain ATCC BAA-461 / DSM 12804 / CCUG 43448).